The chain runs to 461 residues: Dihydrofolate reductase (461 aa).

The DHFR domain maps to 233 to 447; it reads DLTMIVAVSS…VEIEFELYGK (215 aa). NADP(+) contacts are provided by residues Ala-239 and 246-252; that span reads GIGKKNS. Position 260–265 (260–265) interacts with substrate; it reads EMAYFA. NADP(+) is bound at residue 292–294; it reads RSC. Arg-308 provides a ligand contact to substrate. Residues 314–316 and 365–372 contribute to the NADP(+) site; these read TRN and GGSFLYGS.

The protein belongs to the dihydrofolate reductase family.

It carries out the reaction (6S)-5,6,7,8-tetrahydrofolate + NADP(+) = 7,8-dihydrofolate + NADPH + H(+). It functions in the pathway cofactor biosynthesis; tetrahydrofolate biosynthesis; 5,6,7,8-tetrahydrofolate from 7,8-dihydrofolate: step 1/1. In terms of biological role, key enzyme in folate metabolism. Catalyzes an essential reaction for de novo glycine and purine synthesis, and for DNA precursor synthesis. The polypeptide is Dihydrofolate reductase (dfr1) (Schizosaccharomyces pombe (strain 972 / ATCC 24843) (Fission yeast)).